A 584-amino-acid polypeptide reads, in one-letter code: ATP-dependent lipid A-core flippase (584 aa).

Helical transmembrane passes span 18–38 (LWPI…TLIL), 65–85 (VFVW…FSGF), 155–175 (IIGL…ILVL), 252–272 (IFDP…LYAA), and 277–297 (VMEM…IVLM). Positions 30–312 (VVASITLILN…LTNVSAQFQR (283 aa)) constitute an ABC transmembrane type-1 domain. In terms of domain architecture, ABC transporter spans 344-580 (IIFDDVTFFY…QGIYAQLYKL (237 aa)). 378–385 (GRSGSGKS) contributes to the ATP binding site.

It belongs to the ABC transporter superfamily. Lipid exporter (TC 3.A.1.106) family. As to quaternary structure, homodimer.

It is found in the cell inner membrane. The enzyme catalyses ATP + H2O + lipid A-core oligosaccharideSide 1 = ADP + phosphate + lipid A-core oligosaccharideSide 2.. Functionally, involved in lipopolysaccharide (LPS) biosynthesis. Translocates lipid A-core from the inner to the outer leaflet of the inner membrane. Transmembrane domains (TMD) form a pore in the inner membrane and the ATP-binding domain (NBD) is responsible for energy generation. The polypeptide is ATP-dependent lipid A-core flippase (Blochmanniella pennsylvanica (strain BPEN)).